We begin with the raw amino-acid sequence, 220 residues long: Pro-Pro endopeptidase (220 aa).

A signal peptide spans 1–26; it reads MRPSKKLLIAIISIFLISSVPVSAHA. In terms of domain architecture, ATLF-like spans 35 to 220; that stretch reads KDTLSQIVVF…TYSFLQNLAK (186 aa). Interacts with substrate peptide stretches follow at residues 101–103 and 117–119; these read KGW and GGS. His-142 lines the Zn(2+) pocket. Catalysis depends on Glu-143, which acts as the Proton acceptor. 3 residues coordinate Zn(2+): His-146, Tyr-178, and Glu-185.

Belongs to the peptidase M34 family. Pro-Pro endopeptidase subfamily. As to quaternary structure, monomer. Zn(2+) serves as cofactor.

It localises to the secreted. It catalyses the reaction The enzyme catalyzes the hydrolytic cleavage of peptide bonds between two proline residues.. Its activity is regulated as follows. Is inhibited by the chelating agent o-phenanthroline in vitro. Zinc-dependent endoprotease with a unique preference for proline residues surrounding the scissile bond. Exhibits a high preference for an asparagine at the P2 position and hydrophobic residues (Val, Ile, Leu) at the P3 position. Efficiently cleaves the LPXTG cell surface proteins CD630_28310 and CD630_32460 at multiple cleavage sites in vivo. Has a role in the regulation of C.difficile adhesion versus motility by cleaving surface adhesion proteins such as the collagen binding protein CD630_28310, and is important for efficient infection. Is also able to cleave fibronectin and fibrinogen in vitro; cleaves at the N-terminus of the beta-chain of fibrinogen. Destabilizes the fibronectin network produced by human fibroblasts. Therefore, may be important in key steps of clostridial pathogenesis by degrading extracellular matrix components associated with the gut epithelial cells. To a lesser extent, IgA1, IgA2, and human HSP 90-beta, but not HSP 90-alpha, are also substrates for the enzyme. Is not active on different collagen types, casein and gelatin. This Clostridioides difficile (strain 630) (Peptoclostridium difficile) protein is Pro-Pro endopeptidase.